The chain runs to 748 residues: 5-methyltetrahydropteroyltriglutamate--homocysteine methyltransferase (748 aa).

5-methyltetrahydropteroyltri-L-glutamate contacts are provided by residues 18–21 (REWK) and Lys112. Residues 420-422 (IGS) and Glu473 contribute to the L-homocysteine site. Residues 420–422 (IGS) and Glu473 each bind L-methionine. Trp550 serves as a coordination point for 5-methyltetrahydropteroyltri-L-glutamate. Residue Asp588 coordinates L-homocysteine. Asp588 is a binding site for L-methionine. A 5-methyltetrahydropteroyltri-L-glutamate-binding site is contributed by Glu594. Positions 630, 632, and 654 each coordinate Zn(2+). Catalysis depends on His683, which acts as the Proton donor. Cys715 provides a ligand contact to Zn(2+).

This sequence belongs to the vitamin-B12 independent methionine synthase family. The cofactor is Zn(2+).

It catalyses the reaction 5-methyltetrahydropteroyltri-L-glutamate + L-homocysteine = tetrahydropteroyltri-L-glutamate + L-methionine. The protein operates within amino-acid biosynthesis; L-methionine biosynthesis via de novo pathway; L-methionine from L-homocysteine (MetE route): step 1/1. In terms of biological role, catalyzes the transfer of a methyl group from 5-methyltetrahydrofolate to homocysteine resulting in methionine formation. The polypeptide is 5-methyltetrahydropteroyltriglutamate--homocysteine methyltransferase (Staphylococcus epidermidis (strain ATCC 12228 / FDA PCI 1200)).